A 924-amino-acid polypeptide reads, in one-letter code: Probable dipeptidyl-aminopeptidase B (924 aa).

Residues 1–104 (MPPFTYSDDT…DQRSPGDGQR (104 aa)) are disordered. Topologically, residues 1–111 (MPPFTYSDDT…GQRMDRSLRR (111 aa)) are cytoplasmic. The segment covering 9–23 (DTLRSGRDRFRDHSP) has biased composition (basic and acidic residues). A compositionally biased stretch (polar residues) spans 31 to 43 (SQETDSSASTTSI). Composition is skewed to basic and acidic residues over residues 47–58 (RIQERLDTKEFT) and 92–104 (SRSD…DGQR). Residues 112–132 (WLFIVSGVLVATWVIGLFVFV) form a helical; Signal-anchor for type II membrane protein membrane-spanning segment. The Vacuolar portion of the chain corresponds to 133–924 (SSKAYKPSSS…GMKKRAAPTA (792 aa)). N-linked (GlcNAc...) asparagine glycans are attached at residues asparagine 231 and asparagine 364. Serine 768 serves as the catalytic Charge relay system. N-linked (GlcNAc...) asparagine glycosylation occurs at asparagine 827. Catalysis depends on charge relay system residues aspartate 845 and histidine 878.

Belongs to the peptidase S9B family.

Its subcellular location is the vacuole membrane. The catalysed reaction is Release of an N-terminal dipeptide, Xaa-Yaa-|-Zaa-, from a polypeptide, preferentially when Yaa is Pro, provided Zaa is neither Pro nor hydroxyproline.. Type IV dipeptidyl-peptidase which removes N-terminal dipeptides sequentially from polypeptides having unsubstituted N-termini provided that the penultimate residue is proline. In Sordaria macrospora (strain ATCC MYA-333 / DSM 997 / K(L3346) / K-hell), this protein is Probable dipeptidyl-aminopeptidase B (DAPB).